Reading from the N-terminus, the 418-residue chain is Metacaspase-2 (418 aa).

Positions 68-113 are disordered; the sequence is PSPYTHAPHAPSPFNHAPPDSYPFTHAPPASSPFNHAPPGPPPPVH. Residues 70 to 80 show a composition bias toward low complexity; it reads PYTHAPHAPSP. Residues 103–112 show a composition bias toward pro residues; sequence HAPPGPPPPV. Residues His200 and Cys256 contribute to the active site. The disordered stretch occupies residues 385–406; the sequence is PDEEEEVNQAPQKTQEPQLSAN. Positions 393–405 are enriched in polar residues; that stretch reads QAPQKTQEPQLSA.

It belongs to the peptidase C14B family.

In terms of biological role, acts as a negative regulator of oxidative stress cell death and hypersensitive cell death response mediated by immune response. Acts via indirect or direct regulation of AMC1 at postranscriptional level. This is Metacaspase-2 (AMC2) from Arabidopsis thaliana (Mouse-ear cress).